The sequence spans 283 residues: Phospholipase C (283 aa).

The first 24 residues, 1–24 (MKKKVLALAAAITVVAPLQSVAFA), serve as a signal peptide directing secretion. Positions 25–38 (HENDGGSKIKIVHR) are excised as a propeptide. 9 residues coordinate Zn(2+): Trp39, His52, Asp93, His107, His156, Asp160, His166, His180, and Glu184. The Zn-dependent PLC domain occupies 39-283 (WSAEDKHKEG…QLWFDTYGDR (245 aa)).

Belongs to the bacterial zinc-metallophospholipase C family. As to quaternary structure, monomer. Requires Zn(2+) as cofactor.

It carries out the reaction a 1,2-diacyl-sn-glycero-3-phosphocholine + H2O = phosphocholine + a 1,2-diacyl-sn-glycerol + H(+). Functionally, required, with sphingomyelinase, to effect target cell lysis (hemolysis). The chain is Phospholipase C (plc) from Bacillus cereus.